We begin with the raw amino-acid sequence, 331 residues long: MELHILEHRVRVLSLARPGLWLYTHPLIKLLFLPSRSRCKFFSLTETPEDYTLMVDEEGFKELPPSEFLQVAEATWLVMNVSHSGSVVQAAGVTKIARSVIAPLAEHHVSVLMLSTYQTDFILVREQDLSVVIHTLAREFQIYREVGGEPVPVTGDDSSNGFPQAQHGPSPTVHPIQSPQNRFCVLTLDPETLPAVATTLIDVLFYSHSVPKEAASGGPESTSIPFFAFSLIEGYISIVMDAETQKKFPSDLLLTSSSGELWRMVRIGGQPLGFDECGIVAQIAGPLAAVDVSAYYISTFNFDHALVPEDEISCVIDILQRRQEGLASKDP.

A Phosphoserine modification is found at Ser14. Residues 72-139 form the ACT 1 domain; that stretch reads AEATWLVMNV…SVVIHTLARE (68 aa). An L-arginine-binding site is contributed by 110–111; it reads SV. Positions 155–174 are disordered; it reads GDDSSNGFPQAQHGPSPTVH. Positions 156 to 174 are enriched in polar residues; sequence DDSSNGFPQAQHGPSPTVH. The ACT 2 domain maps to 262-322; it reads WRMVRIGGQP…SCVIDILQRR (61 aa). L-arginine contacts are provided by residues Gly273, 279–280, and 299–303; these read IV and TFNFD.

It belongs to the GATS family. As to quaternary structure, forms homodimers and heterodimers with CASTOR2. Interacts with the GATOR2 complex which is composed of MIOS, SEC13, SEH1L, WDR24 and WDR59; the interaction is negatively regulated by arginine. Interacts with TM4SF5; the interaction is positively regulated by leucine and is negatively regulated by arginine. In terms of processing, phosphorylation at Ser-14 by AKT1, promoting the interaction between CASTOR1 and RNF167. Ubiquitinated by RNF167 via 'Lys-29'-polyubiquitination, leading to its degradation, releasing the GATOR2 complex. Ubiquitination by RNF167 is promoted by phosphorylation at Ser-14 by AKT1.

Its subcellular location is the cytoplasm. It localises to the cytosol. In terms of biological role, functions as an intracellular arginine sensor within the amino acid-sensing branch of the TORC1 signaling pathway. As a homodimer or a heterodimer with CASTOR2, binds and inhibits the GATOR subcomplex GATOR2 and thereby mTORC1. Binding of arginine to CASTOR1 allosterically disrupts the interaction of CASTOR1-containing dimers with GATOR2 which can in turn activate mTORC1 and the TORC1 signaling pathway. The protein is Cytosolic arginine sensor for mTORC1 subunit 1 of Rattus norvegicus (Rat).